The primary structure comprises 536 residues: Lysosomal acid glucosylceramidase (536 aa).

An N-terminal signal peptide occupies residues 1-39 (MEFSSPSREECPKPSGRVNIMAGSLTGLLLLQAVSWASG). 2 cysteine pairs are disulfide-bonded: Cys43–Cys55 and Cys57–Cys62. N-linked (GlcNAc...) asparagine glycosylation is found at Asn58, Asn98, and Asn185. Glu274 acts as the Proton donor in catalysis. Residue Asn309 is glycosylated (N-linked (GlcNAc...) asparagine). The active-site Nucleophile is the Glu379. Residue Asn501 is glycosylated (N-linked (GlcNAc...) asparagine).

This sequence belongs to the glycosyl hydrolase 30 family. Interacts with saposin-C. Interacts with SCARB2. Interacts with TCP1. Interacts with GRN; this interaction prevents aggregation of GBA1-SCARB2 complex via interaction with HSPA1A upon stress.

The protein localises to the lysosome membrane. The enzyme catalyses a beta-D-glucosyl-(1&lt;-&gt;1')-N-acylsphing-4-enine + H2O = an N-acylsphing-4-enine + D-glucose. It carries out the reaction a beta-D-galactosyl-(1&lt;-&gt;1')-N-acylsphing-4-enine + H2O = an N-acylsphing-4-enine + D-galactose. It catalyses the reaction cholesteryl 3-beta-D-glucoside + H2O = cholesterol + D-glucose. The catalysed reaction is a beta-D-glucosyl-(1&lt;-&gt;1')-N-acylsphing-4-enine + cholesterol = cholesteryl 3-beta-D-glucoside + an N-acylsphing-4-enine. The enzyme catalyses beta-D-glucosyl-N-(9Z-octadecenoyl)-sphing-4E-enine + cholesterol = N-(9Z-octadecenoyl)-sphing-4-enine + cholesteryl 3-beta-D-glucoside. It carries out the reaction beta-D-glucosyl-N-octanoylsphing-4E-enine + cholesterol = N-octanoylsphing-4-enine + cholesteryl 3-beta-D-glucoside. It catalyses the reaction beta-D-glucosyl-N-dodecanoylsphing-4-enine + cholesterol = N-dodecanoylsphing-4-enine + cholesteryl 3-beta-D-glucoside. The catalysed reaction is beta-D-glucosyl-(1&lt;-&gt;1)-N-octadecanoylsphing-4-enine + cholesterol = N-octadecanoylsphing-4-enine + cholesteryl 3-beta-D-glucoside. The enzyme catalyses beta-D-glucosyl-(1&lt;-&gt;1')-N-(15Z-tetracosenoyl)-sphing-4-enine + cholesterol = N-(15Z-tetracosenoyl)-sphing-4-enine + cholesteryl 3-beta-D-glucoside. It carries out the reaction a beta-D-galactosyl-(1&lt;-&gt;1')-N-acylsphing-4-enine + cholesterol = cholesteryl 3-beta-D-galactoside + an N-acylsphing-4-enine. It catalyses the reaction 1-(beta-D-galactosyl)-N-dodecanoylsphing-4-enine + cholesterol = cholesteryl 3-beta-D-galactoside + N-dodecanoylsphing-4-enine. The catalysed reaction is a beta-D-xylosyl-(1&lt;-&gt;1')-N-acylsphing-4-enine + cholesterol = cholesteryl 3-beta-D-xyloside + an N-acylsphing-4-enine. The enzyme catalyses beta-D-xylosyl-(1&lt;-&gt;1')-N-(9Z-octadecenoyl)-sphing-4-enine + cholesterol = cholesteryl 3-beta-D-xyloside + N-(9Z-octadecenoyl)-sphing-4-enine. The protein operates within steroid metabolism; cholesterol metabolism. It functions in the pathway sphingolipid metabolism. In terms of biological role, glucosylceramidase that catalyzes, within the lysosomal compartment, the hydrolysis of glucosylceramides/GlcCers (such as beta-D-glucosyl-(1&lt;-&gt;1')-N-acylsphing-4-enine) into free ceramides (such as N-acylsphing-4-enine) and glucose. Plays a central role in the degradation of complex lipids and the turnover of cellular membranes. Through the production of ceramides, participates in the PKC-activated salvage pathway of ceramide formation. Catalyzes the glucosylation of cholesterol, through a transglucosylation reaction where glucose is transferred from GlcCer to cholesterol. GlcCer containing mono-unsaturated fatty acids (such as beta-D-glucosyl-N-(9Z-octadecenoyl)-sphing-4-enine) are preferred as glucose donors for cholesterol glucosylation when compared with GlcCer containing same chain length of saturated fatty acids (such as beta-D-glucosyl-N-octadecanoyl-sphing-4-enine). Under specific conditions, may alternatively catalyze the reverse reaction, transferring glucose from cholesteryl 3-beta-D-glucoside to ceramide. Can also hydrolyze cholesteryl 3-beta-D-glucoside producing glucose and cholesterol. Catalyzes the hydrolysis of galactosylceramides/GalCers (such as beta-D-galactosyl-(1&lt;-&gt;1')-N-acylsphing-4-enine), as well as the transfer of galactose between GalCers and cholesterol in vitro, but with lower activity than with GlcCers. Contrary to GlcCer and GalCer, xylosylceramide/XylCer (such as beta-D-xyosyl-(1&lt;-&gt;1')-N-acylsphing-4-enine) is not a good substrate for hydrolysis, however it is a good xylose donor for transxylosylation activity to form cholesteryl 3-beta-D-xyloside. This chain is Lysosomal acid glucosylceramidase (GBA1), found in Pongo abelii (Sumatran orangutan).